The primary structure comprises 570 residues: Urease subunit alpha (570 aa).

Residues 131–570 (GGMDSHIHFI…LPMAQRYFLF (440 aa)) enclose the Urease domain. Ni(2+) contacts are provided by H136, H138, and K219. K219 carries the post-translational modification N6-carboxylysine. Residue H221 participates in substrate binding. Ni(2+) is bound by residues H248 and H274. H322 (proton donor) is an active-site residue. Residue D362 participates in Ni(2+) binding.

This sequence belongs to the metallo-dependent hydrolases superfamily. Urease alpha subunit family. Heterotrimer of UreA (gamma), UreB (beta) and UreC (alpha) subunits. Three heterotrimers associate to form the active enzyme. The cofactor is Ni cation. Carboxylation allows a single lysine to coordinate two nickel ions.

The protein resides in the cytoplasm. The catalysed reaction is urea + 2 H2O + H(+) = hydrogencarbonate + 2 NH4(+). The protein operates within nitrogen metabolism; urea degradation; CO(2) and NH(3) from urea (urease route): step 1/1. In Sinorhizobium fredii (strain NBRC 101917 / NGR234), this protein is Urease subunit alpha.